A 151-amino-acid chain; its full sequence is Nucleoside diphosphate kinase (151 aa).

Residues Lys-11, Phe-59, Arg-87, Thr-93, Arg-104, and Asn-114 each coordinate ATP. The active-site Pros-phosphohistidine intermediate is the His-117.

It belongs to the NDK family. Homotetramer. Mg(2+) serves as cofactor.

It is found in the cytoplasm. The catalysed reaction is a 2'-deoxyribonucleoside 5'-diphosphate + ATP = a 2'-deoxyribonucleoside 5'-triphosphate + ADP. It carries out the reaction a ribonucleoside 5'-diphosphate + ATP = a ribonucleoside 5'-triphosphate + ADP. Major role in the synthesis of nucleoside triphosphates other than ATP. The ATP gamma phosphate is transferred to the NDP beta phosphate via a ping-pong mechanism, using a phosphorylated active-site intermediate. This is Nucleoside diphosphate kinase from Prochlorococcus marinus (strain MIT 9211).